A 263-amino-acid polypeptide reads, in one-letter code: tRNA (guanine-N(1)-)-methyltransferase (263 aa).

S-adenosyl-L-methionine contacts are provided by residues G124 and L144–L149.

It belongs to the RNA methyltransferase TrmD family. In terms of assembly, homodimer.

Its subcellular location is the cytoplasm. It carries out the reaction guanosine(37) in tRNA + S-adenosyl-L-methionine = N(1)-methylguanosine(37) in tRNA + S-adenosyl-L-homocysteine + H(+). Specifically methylates guanosine-37 in various tRNAs. In Aromatoleum aromaticum (strain DSM 19018 / LMG 30748 / EbN1) (Azoarcus sp. (strain EbN1)), this protein is tRNA (guanine-N(1)-)-methyltransferase.